The chain runs to 671 residues: DNA ligase (671 aa).

NAD(+) contacts are provided by residues 38–42, 87–88, and E113; these read DKEFD and SL. Residue K115 is the N6-AMP-lysine intermediate of the active site. Residues R136, E170, K282, and K306 each contribute to the NAD(+) site. The Zn(2+) site is built by C396, C399, C414, and C419. Positions 586–671 constitute a BRCT domain; it reads SDLQPFVGQS…LLKQEGIAID (86 aa).

This sequence belongs to the NAD-dependent DNA ligase family. LigA subfamily. Mg(2+) serves as cofactor. Requires Mn(2+) as cofactor.

The catalysed reaction is NAD(+) + (deoxyribonucleotide)n-3'-hydroxyl + 5'-phospho-(deoxyribonucleotide)m = (deoxyribonucleotide)n+m + AMP + beta-nicotinamide D-nucleotide.. DNA ligase that catalyzes the formation of phosphodiester linkages between 5'-phosphoryl and 3'-hydroxyl groups in double-stranded DNA using NAD as a coenzyme and as the energy source for the reaction. It is essential for DNA replication and repair of damaged DNA. This Leptospira biflexa serovar Patoc (strain Patoc 1 / Ames) protein is DNA ligase.